We begin with the raw amino-acid sequence, 80 residues long: Beta-toxin KAaH1 (80 aa).

Positions 1-22 are cleaved as a signal peptide; sequence MMKLMLFSIIVILFSLIGSIHG. The LCN-type CS-alpha/beta domain maps to 25-80; that stretch reads VPGNYPLDSSDDTYLCAPLGENPFCIKICRKHGVKYGYCYAFQCWCEYLEDKNVKI. 3 cysteine pairs are disulfide-bonded: Cys40–Cys63, Cys49–Cys68, and Cys53–Cys70.

The protein belongs to the long (3 C-C) scorpion toxin superfamily. Sodium/Potassium channel inhibitor family. Expressed by the venom gland.

The protein localises to the secreted. Inhibits the vertebrate potassium channels Kv1.1/KCNA1 and Kv1.3/KCNA3 in vitro with an IC(50) of 5.3 nM and 50.0 nM respectively. This Androctonus australis (Sahara scorpion) protein is Beta-toxin KAaH1.